The sequence spans 261 residues: Phosphate import ATP-binding protein PstB (261 aa).

One can recognise an ABC transporter domain in the interval 15–256 (LQVRRLNFYY…PAHQETENYI (242 aa)). An ATP-binding site is contributed by 47–54 (GPSGCGKS).

It belongs to the ABC transporter superfamily. Phosphate importer (TC 3.A.1.7) family. As to quaternary structure, the complex is composed of two ATP-binding proteins (PstB), two transmembrane proteins (PstC and PstA) and a solute-binding protein (PstS).

It is found in the cell inner membrane. The catalysed reaction is phosphate(out) + ATP + H2O = ADP + 2 phosphate(in) + H(+). Its function is as follows. Part of the ABC transporter complex PstSACB involved in phosphate import. Responsible for energy coupling to the transport system. The sequence is that of Phosphate import ATP-binding protein PstB from Burkholderia sp.